The following is a 168-amino-acid chain: Phosphopantetheine adenylyltransferase (168 aa).

Threonine 14 serves as a coordination point for substrate. Residues threonine 14–phenylalanine 15 and histidine 22 each bind ATP. Positions 46, 78, and 92 each coordinate substrate. ATP-binding positions include glycine 93–arginine 95, glutamate 103, and tyrosine 128–serine 134.

Belongs to the bacterial CoaD family. As to quaternary structure, homohexamer. Mg(2+) serves as cofactor.

It localises to the cytoplasm. It catalyses the reaction (R)-4'-phosphopantetheine + ATP + H(+) = 3'-dephospho-CoA + diphosphate. It participates in cofactor biosynthesis; coenzyme A biosynthesis; CoA from (R)-pantothenate: step 4/5. In terms of biological role, reversibly transfers an adenylyl group from ATP to 4'-phosphopantetheine, yielding dephospho-CoA (dPCoA) and pyrophosphate. This Xanthomonas euvesicatoria pv. vesicatoria (strain 85-10) (Xanthomonas campestris pv. vesicatoria) protein is Phosphopantetheine adenylyltransferase.